We begin with the raw amino-acid sequence, 297 residues long: tRNA uridine(34) hydroxylase (297 aa).

The region spanning 133–228 (RGEEVVFFDG…YGETFKDQGL (96 aa)) is the Rhodanese domain. Residue cysteine 188 is the Cysteine persulfide intermediate of the active site.

The protein belongs to the TrhO family.

It carries out the reaction uridine(34) in tRNA + AH2 + O2 = 5-hydroxyuridine(34) in tRNA + A + H2O. Its function is as follows. Catalyzes oxygen-dependent 5-hydroxyuridine (ho5U) modification at position 34 in tRNAs. This is tRNA uridine(34) hydroxylase from Arthrobacter sp. (strain FB24).